The following is a 1118-amino-acid chain: Error-prone DNA polymerase (1118 aa).

Residues 1071-1118 (GPQPMGYAKEVGSDRRSRPEIGNAPARQDLATLSEEAEQVMPKGRNFQ) are disordered.

Belongs to the DNA polymerase type-C family. DnaE2 subfamily.

It is found in the cytoplasm. It carries out the reaction DNA(n) + a 2'-deoxyribonucleoside 5'-triphosphate = DNA(n+1) + diphosphate. Functionally, DNA polymerase involved in damage-induced mutagenesis and translesion synthesis (TLS). It is not the major replicative DNA polymerase. The sequence is that of Error-prone DNA polymerase from Mesorhizobium japonicum (strain LMG 29417 / CECT 9101 / MAFF 303099) (Mesorhizobium loti (strain MAFF 303099)).